A 295-amino-acid polypeptide reads, in one-letter code: GTP-binding protein GEM (295 aa).

The tract at residues 39–64 is disordered; that stretch reads CNLRNRHSTAPEEHCRRSWSSDSTDS. GTP contacts are provided by residues 81 to 88 and 190 to 193; these read GEQGVGKS and NKSD. A calmodulin-binding region spans residues 265–284; the sequence is ARRFWGKIVAKNNKNMAFKL.

It belongs to the small GTPase superfamily. RGK family. As to quaternary structure, interacts with calmodulin in a Ca(2+)-dependent manner. Calmodulin binding significantly decreases GTP binding. Binds ROCK1. In terms of processing, phosphorylated on tyrosine residues.

It is found in the cell membrane. Could be a regulatory protein, possibly participating in receptor-mediated signal transduction at the plasma membrane. Has guanine nucleotide-binding activity but undetectable intrinsic GTPase activity. This Mus musculus (Mouse) protein is GTP-binding protein GEM (Gem).